We begin with the raw amino-acid sequence, 159 residues long: ATP synthase subunit b (159 aa).

The chain crosses the membrane as a helical span at residues 2 to 22 (NISIPQIIAAILNFIILLLIV).

This sequence belongs to the ATPase B chain family. In terms of assembly, F-type ATPases have 2 components, F(1) - the catalytic core - and F(0) - the membrane proton channel. F(1) has five subunits: alpha(3), beta(3), gamma(1), delta(1), epsilon(1). F(0) has three main subunits: a(1), b(2) and c(10-14). The alpha and beta chains form an alternating ring which encloses part of the gamma chain. F(1) is attached to F(0) by a central stalk formed by the gamma and epsilon chains, while a peripheral stalk is formed by the delta and b chains.

Its subcellular location is the cell membrane. In terms of biological role, f(1)F(0) ATP synthase produces ATP from ADP in the presence of a proton or sodium gradient. F-type ATPases consist of two structural domains, F(1) containing the extramembraneous catalytic core and F(0) containing the membrane proton channel, linked together by a central stalk and a peripheral stalk. During catalysis, ATP synthesis in the catalytic domain of F(1) is coupled via a rotary mechanism of the central stalk subunits to proton translocation. Component of the F(0) channel, it forms part of the peripheral stalk, linking F(1) to F(0). The chain is ATP synthase subunit b from Clostridium botulinum (strain Okra / Type B1).